The following is a 170-amino-acid chain: Putative pre-16S rRNA nuclease (170 aa).

The interval 1-29 is disordered; sequence MVAASHRSPDRPGDPEGLEPGTGRGRRLG.

This sequence belongs to the YqgF nuclease family.

It localises to the cytoplasm. Functionally, could be a nuclease involved in processing of the 5'-end of pre-16S rRNA. In Mycobacterium ulcerans (strain Agy99), this protein is Putative pre-16S rRNA nuclease.